The chain runs to 376 residues: MITAVNRPAALHINLAAIKENTRQAKAHLKPGQKLFCVVKANAYGHGAARLAPVMEEAGADGFCVAMLDEGLELRRAQIVKPILVLGLQPAEESALAAANDISLPVSSLDWLKKAEKVLRKEGLQLKIHLAIDSGMGRIGFSEDEDFKAVNEYLQGNDAFFVEGMFTHFASADSADASYFDYQVKRFKHMESLLTVKPKWIHVDNTAAILFDKDVASDIVRFGIGLYGLNPSSAPGSRDLEPAFALEPAMSFVSELTYVKQIHKGYGVGYGSTHIAEEDEWIGTVPVGYADGWIRKFQGFKVKVGDTYCPIVGRVCMDQFMVLLPKEVPAGTPVELISADPAAPNSLRRAADWLDTIHYEVACQFNDRLDRIYDNE.

Lys-40 functions as the Proton acceptor; specific for D-alanine in the catalytic mechanism. Residue Lys-40 is modified to N6-(pyridoxal phosphate)lysine. Substrate is bound at residue Arg-138. Tyr-270 serves as the catalytic Proton acceptor; specific for L-alanine. Met-317 contacts substrate.

It belongs to the alanine racemase family. The cofactor is pyridoxal 5'-phosphate.

The catalysed reaction is L-alanine = D-alanine. It participates in amino-acid biosynthesis; D-alanine biosynthesis; D-alanine from L-alanine: step 1/1. Catalyzes the interconversion of L-alanine and D-alanine. May also act on other amino acids. This chain is Alanine racemase (alr), found in Lactobacillus delbrueckii subsp. bulgaricus (strain ATCC BAA-365 / Lb-18).